Consider the following 518-residue polypeptide: Light-independent protochlorophyllide reductase subunit B (518 aa).

D36 is a [4Fe-4S] cluster binding site. D285 serves as the catalytic Proton donor. 420–421 (GL) serves as a coordination point for substrate.

This sequence belongs to the ChlB/BchB/BchZ family. In terms of assembly, protochlorophyllide reductase is composed of three subunits; BchL, BchN and BchB. Forms a heterotetramer of two BchB and two BchN subunits. [4Fe-4S] cluster is required as a cofactor.

It catalyses the reaction chlorophyllide a + oxidized 2[4Fe-4S]-[ferredoxin] + 2 ADP + 2 phosphate = protochlorophyllide a + reduced 2[4Fe-4S]-[ferredoxin] + 2 ATP + 2 H2O. The protein operates within porphyrin-containing compound metabolism; bacteriochlorophyll biosynthesis (light-independent). Component of the dark-operative protochlorophyllide reductase (DPOR) that uses Mg-ATP and reduced ferredoxin to reduce ring D of protochlorophyllide (Pchlide) to form chlorophyllide a (Chlide). This reaction is light-independent. The NB-protein (BchN-BchB) is the catalytic component of the complex. The polypeptide is Light-independent protochlorophyllide reductase subunit B (Bradyrhizobium sp. (strain ORS 278)).